The primary structure comprises 288 residues: NAD(P)H-hydrate epimerase (288 aa).

Residues 1–59 constitute a mitochondrion transit peptide; sequence MSGLRALLGLGLPVAGSRLPRVRVQAGACRARPTWWGPQRLISGGRGDVEGMASSAVKY. Positions 65-275 constitute a YjeF N-terminal domain; that stretch reads AQAVDQELFN…ALEKKYQLNL (211 aa). 119–123 serves as a coordination point for (6S)-NADPHX; sequence NNGGD. K(+) is bound at residue N120. N6-succinyllysine is present on K144. D185 is a binding site for K(+). (6S)-NADPHX contacts are provided by residues 189–195 and D218; that span reads GFSFKGE. K(+) is bound at residue S221.

This sequence belongs to the NnrE/AIBP family. In terms of assembly, homodimer. Interacts with APOA1 and APOA2. Requires K(+) as cofactor. Undergoes physiological phosphorylation during sperm capacitation, downstream to PKA activation.

The protein localises to the mitochondrion. It localises to the secreted. It carries out the reaction (6R)-NADHX = (6S)-NADHX. The catalysed reaction is (6R)-NADPHX = (6S)-NADPHX. Functionally, catalyzes the epimerization of the S- and R-forms of NAD(P)HX, a damaged form of NAD(P)H that is a result of enzymatic or heat-dependent hydration. This is a prerequisite for the S-specific NAD(P)H-hydrate dehydratase to allow the repair of both epimers of NAD(P)HX. Accelerates cholesterol efflux from endothelial cells to high-density lipoprotein (HDL) and thereby regulates angiogenesis. The chain is NAD(P)H-hydrate epimerase from Sus scrofa (Pig).